A 477-amino-acid polypeptide reads, in one-letter code: Ubiquitin carboxyl-terminal hydrolase 7 (477 aa).

The 76-residue stretch at 2–77 folds into the Ubiquitin-like domain; the sequence is LTVSVKWQKK…LMMMGTADEI (76 aa). Residues 104 to 473 enclose the USP domain; sequence AGLVNLGNTC…MAYIVMYKAR (370 aa). C113 serves as the catalytic Nucleophile. The interval 171–190 is calmodulin-binding; it reads MPFWMVLQKKYPQFAQLHNG. The tract at residues 364 to 401 is disordered; the sequence is QASAKSSSKGDDVKMTDAEGSSNQSGESSTGDQQEGAS. Over residues 371–380 the composition is skewed to basic and acidic residues; it reads SKGDDVKMTD. Residues 382–399 show a composition bias toward polar residues; it reads EGSSNQSGESSTGDQQEG. H425 serves as the catalytic Proton acceptor.

Belongs to the peptidase C19 family. As to quaternary structure, interacts with calmodulin (CaM).

The catalysed reaction is Thiol-dependent hydrolysis of ester, thioester, amide, peptide and isopeptide bonds formed by the C-terminal Gly of ubiquitin (a 76-residue protein attached to proteins as an intracellular targeting signal).. Functionally, recognizes and hydrolyzes the peptide bond at the C-terminal Gly of ubiquitin. Involved in the processing of poly-ubiquitin precursors as well as that of ubiquitinated proteins. In Arabidopsis thaliana (Mouse-ear cress), this protein is Ubiquitin carboxyl-terminal hydrolase 7 (UBP7).